The following is a 510-amino-acid chain: Ferredoxin--nitrite reductase (510 aa).

[4Fe-4S] cluster is bound by residues C396, C402, C437, and C441. Residue C441 participates in siroheme binding.

The protein belongs to the nitrite and sulfite reductase 4Fe-4S domain family.

The enzyme catalyses 6 oxidized [2Fe-2S]-[ferredoxin] + NH4(+) + 2 H2O = nitrite + 6 reduced [2Fe-2S]-[ferredoxin] + 8 H(+). In Leptolyngbya laminosa (Phormidium laminosum), this protein is Ferredoxin--nitrite reductase (nirA).